A 292-amino-acid chain; its full sequence is Formamidopyrimidine-DNA glycosylase (292 aa).

The active-site Schiff-base intermediate with DNA is Pro2. Glu3 serves as the catalytic Proton donor. The Proton donor; for beta-elimination activity role is filled by Lys61. DNA contacts are provided by His103, Arg122, and Lys168. The segment at 254–288 (DAYGREGEHCRRCGAVMRREKFMNRSSFYCPRCQP) adopts an FPG-type zinc-finger fold. The active-site Proton donor; for delta-elimination activity is the Arg278.

The protein belongs to the FPG family. Monomer. Zn(2+) is required as a cofactor.

The enzyme catalyses Hydrolysis of DNA containing ring-opened 7-methylguanine residues, releasing 2,6-diamino-4-hydroxy-5-(N-methyl)formamidopyrimidine.. The catalysed reaction is 2'-deoxyribonucleotide-(2'-deoxyribose 5'-phosphate)-2'-deoxyribonucleotide-DNA = a 3'-end 2'-deoxyribonucleotide-(2,3-dehydro-2,3-deoxyribose 5'-phosphate)-DNA + a 5'-end 5'-phospho-2'-deoxyribonucleoside-DNA + H(+). Functionally, involved in base excision repair of DNA damaged by oxidation or by mutagenic agents. Acts as a DNA glycosylase that recognizes and removes damaged bases. Has a preference for oxidized purines, such as 7,8-dihydro-8-oxoguanine (8-oxoG). Has AP (apurinic/apyrimidinic) lyase activity and introduces nicks in the DNA strand. Cleaves the DNA backbone by beta-delta elimination to generate a single-strand break at the site of the removed base with both 3'- and 5'-phosphates. This Mycobacterium ulcerans (strain Agy99) protein is Formamidopyrimidine-DNA glycosylase.